The sequence spans 501 residues: MNDFSKEAVKPADSATAAAKAEKRSRYAAGVMKYREMGYWQPDYTPKDTDVIALFRITPQPGVEPEEAAAAVAGESSTATWTVVWTDRLTACDMYRAKAFRVEPVPNPAEGEPQYFAFIAYELDLFEEGSVANLTASIIGNVFGFKPLKALRLEDMRIPVAYLKTFQGPPTGIVVERERLDKYGRPLLGATVKPKLGLSGKNYGRVVYEGLKGGLDFLKDDENINSQPFMHWRDRYLFAMEAVHRAQAETGEVKGHYLNVTAGTMEDMYERAEFAKELGSCIVMIDLVIGWTAITSMGRWARKNDMILHLHRAGHGTYTRQRNHGISFRVIAKWLRMAGVDHAHAGTAVGKLDGDPLSVQGYYNVLRESHNSVDLTRGIFFDQHWAGLRKVMPVASGGIHAGQMHQLLDLFGDDAILQFGGGTIGHPSGIQAGATANRVALETMVKARNEGRDIANEGSDLLEAAARHCTPLKQALDTWGDVTFNYTPTDSPDFAVTPSVA.

2 residues coordinate substrate: Asn141 and Thr191. Lys193 functions as the Proton acceptor in the catalytic mechanism. Substrate is bound at residue Lys195. Mg(2+)-binding residues include Lys219, Asp221, and Glu222. Lys219 carries the N6-carboxylysine modification. The active-site Proton acceptor is the His311. Substrate is bound by residues Arg312, His344, and Ser396.

This sequence belongs to the RuBisCO large chain family. Type I subfamily. In terms of assembly, heterohexadecamer of 8 large chains and 8 small chains. The cofactor is Mg(2+).

It carries out the reaction 2 (2R)-3-phosphoglycerate + 2 H(+) = D-ribulose 1,5-bisphosphate + CO2 + H2O. The enzyme catalyses D-ribulose 1,5-bisphosphate + O2 = 2-phosphoglycolate + (2R)-3-phosphoglycerate + 2 H(+). In terms of biological role, ruBisCO catalyzes two reactions: the carboxylation of D-ribulose 1,5-bisphosphate, the primary event in carbon dioxide fixation, as well as the oxidative fragmentation of the pentose substrate. Both reactions occur simultaneously and in competition at the same active site. In Paraburkholderia phymatum (strain DSM 17167 / CIP 108236 / LMG 21445 / STM815) (Burkholderia phymatum), this protein is Ribulose bisphosphate carboxylase large chain.